The following is a 408-amino-acid chain: BTB/POZ and MATH domain-containing protein 3 (408 aa).

In terms of domain architecture, MATH spans 24–158; sequence NGSHQFTIQG…DDCLVINCTV (135 aa). The BTB domain maps to 194–261; it reads CDIAFQVGDE…IYTDVLPNVH (68 aa).

Belongs to the Tdpoz family. Homodimer or heterodimer with BPM3 and BPM5. Interacts with CUL3A and CUL3B. Interacts with RAP2-4 and RAP2-13. Binds to MYB56 at the promoter of FLOWERING LOCUS T (FT). Ubiquitous.

The protein localises to the nucleus. It localises to the cytoplasm. It participates in protein modification; protein ubiquitination. In terms of biological role, may act as a substrate-specific adapter of an E3 ubiquitin-protein ligase complex (CUL3-RBX1-BTB) which mediates the ubiquitination and subsequent proteasomal degradation of target proteins. This is BTB/POZ and MATH domain-containing protein 3 from Arabidopsis thaliana (Mouse-ear cress).